Consider the following 258-residue polypeptide: NAD(P)H-hydrate epimerase (258 aa).

The region spanning 15–244 is the YjeF N-terminal domain; the sequence is AFQLDQELMS…RIAKEYGIED (230 aa). 75–79 is a binding site for (6S)-NADPHX; that stretch reads NNGGD. Positions 76 and 145 each coordinate K(+). Residues 149–155 and D181 contribute to the (6S)-NADPHX site; that span reads GFSFKPP. S184 lines the K(+) pocket.

This sequence belongs to the NnrE/AIBP family. It depends on K(+) as a cofactor.

It is found in the cytoplasm. The protein localises to the mitochondrion. It catalyses the reaction (6R)-NADHX = (6S)-NADHX. The catalysed reaction is (6R)-NADPHX = (6S)-NADPHX. Its function is as follows. Catalyzes the epimerization of the S- and R-forms of NAD(P)HX, a damaged form of NAD(P)H that is a result of enzymatic or heat-dependent hydration. This is a prerequisite for the S-specific NAD(P)H-hydrate dehydratase to allow the repair of both epimers of NAD(P)HX. This is NAD(P)H-hydrate epimerase from Candida albicans (strain WO-1) (Yeast).